Here is a 135-residue protein sequence, read N- to C-terminus: MSALHQLSALNFLVIGLGAAFGAWTRWLLGLSLNPLFVALPLGTLAANVIGGYLVGVAVGIFHINTHFSLAWKLFAITGFLGGLTTFSTFSAEVVERLLAGQPAWAIGLASVHLAGSLTATYLGLLTVGATRIWA.

4 consecutive transmembrane segments (helical) span residues 12-32, 42-62, 70-90, and 106-126; these read FLVI…LGLS, LGTL…VGIF, LAWK…FSTF, and AIGL…LGLL. The Na(+) site is built by Gly82 and Thr85.

This sequence belongs to the fluoride channel Fluc/FEX (TC 1.A.43) family.

The protein localises to the cell inner membrane. It catalyses the reaction fluoride(in) = fluoride(out). Its activity is regulated as follows. Na(+) is not transported, but it plays an essential structural role and its presence is essential for fluoride channel function. In terms of biological role, fluoride-specific ion channel. Important for reducing fluoride concentration in the cell, thus reducing its toxicity. The polypeptide is Fluoride-specific ion channel FluC (Dechloromonas aromatica (strain RCB)).